The following is an 86-amino-acid chain: Probable weak neurotoxin NNAM2I (86 aa).

An N-terminal signal peptide occupies residues 1-21 (MKTLPLTLVVVTIVCLDLGYT). 5 disulfide bridges follow: Cys-24/Cys-45, Cys-27/Cys-32, Cys-38/Cys-63, Cys-67/Cys-78, and Cys-79/Cys-84.

Belongs to the three-finger toxin family. Ancestral subfamily. Orphan group II sub-subfamily. As to expression, expressed by the venom gland.

Its subcellular location is the secreted. In terms of biological role, binds with low affinity to muscular (alpha-1-beta-1-delta-epsilon/CHRNA1-CHRNB1-CHRND-CHRNE) and very low affinity to neuronal (alpha-7/CHRNA7) nicotinic acetylcholine receptor (nAChR). This chain is Probable weak neurotoxin NNAM2I, found in Naja atra (Chinese cobra).